Here is a 95-residue protein sequence, read N- to C-terminus: Nucleoid-associated protein MMOB0740 (95 aa).

It belongs to the YbaB/EbfC family. Homodimer.

It is found in the cytoplasm. The protein resides in the nucleoid. Binds to DNA and alters its conformation. May be involved in regulation of gene expression, nucleoid organization and DNA protection. The polypeptide is Nucleoid-associated protein MMOB0740 (Mycoplasma mobile (strain ATCC 43663 / 163K / NCTC 11711) (Mesomycoplasma mobile)).